Consider the following 244-residue polypeptide: INO80 complex subunit E (244 aa).

A coiled-coil region spans residues 10–54; it reads DYKKKYRNLKRKLKFLIYEHECFQEELRKAQRKLLKVSRDKSFLL. 2 disordered regions span residues 59–187 and 222–244; these read QYEN…PLTF and FSDA…DIPE. Composition is skewed to low complexity over residues 99–115 and 122–136; these read PPLG…LPPS and ASRA…LASP. The segment covering 157-171 has biased composition (basic residues); it reads RPKREKRPRLPRKLK. Residues Lys-159 and Lys-171 each participate in a glycyl lysine isopeptide (Lys-Gly) (interchain with G-Cter in SUMO2) cross-link. The segment covering 230–244 has biased composition (acidic residues); the sequence is DALDGDDDLVIDIPE.

As to quaternary structure, component of the chromatin remodeling INO80 complex; specifically part of a complex module associated with the N-terminus of INO80.

Its subcellular location is the nucleus. Putative regulatory component of the chromatin remodeling INO80 complex which is involved in transcriptional regulation, DNA replication and probably DNA repair. This chain is INO80 complex subunit E (INO80E), found in Bos taurus (Bovine).